The primary structure comprises 199 residues: Acireductone dioxygenase 1 (199 aa).

Fe(2+)-binding residues include H99, H101, E105, and H144. Residues H99, H101, E105, and H144 each contribute to the Ni(2+) site.

Belongs to the acireductone dioxygenase (ARD) family. Fe(2+) is required as a cofactor. It depends on Ni(2+) as a cofactor.

Its subcellular location is the cytoplasm. It localises to the nucleus. It catalyses the reaction 1,2-dihydroxy-5-(methylsulfanyl)pent-1-en-3-one + O2 = 4-methylsulfanyl-2-oxobutanoate + formate + 2 H(+). It carries out the reaction 1,2-dihydroxy-5-(methylsulfanyl)pent-1-en-3-one + O2 = 3-(methylsulfanyl)propanoate + CO + formate + 2 H(+). Its pathway is amino-acid biosynthesis; L-methionine biosynthesis via salvage pathway; L-methionine from S-methyl-5-thio-alpha-D-ribose 1-phosphate: step 5/6. In terms of biological role, catalyzes 2 different reactions between oxygen and the acireductone 1,2-dihydroxy-3-keto-5-methylthiopentene (DHK-MTPene) depending upon the metal bound in the active site. Fe-containing acireductone dioxygenase (Fe-ARD) produces formate and 2-keto-4-methylthiobutyrate (KMTB), the alpha-ketoacid precursor of methionine in the methionine recycle pathway. Ni-containing acireductone dioxygenase (Ni-ARD) produces methylthiopropionate, carbon monoxide and formate, and does not lie on the methionine recycle pathway. This chain is Acireductone dioxygenase 1 (ARD1), found in Oryza sativa subsp. indica (Rice).